The primary structure comprises 159 residues: Probable cyclic pyranopterin monophosphate synthase (159 aa).

Substrate is bound by residues 74–76 and 110–111; these read MCH and ME. D125 is an active-site residue.

The protein belongs to the MoaC family. As to quaternary structure, homohexamer; trimer of dimers.

It catalyses the reaction (8S)-3',8-cyclo-7,8-dihydroguanosine 5'-triphosphate = cyclic pyranopterin phosphate + diphosphate. It functions in the pathway cofactor biosynthesis; molybdopterin biosynthesis. Catalyzes the conversion of (8S)-3',8-cyclo-7,8-dihydroguanosine 5'-triphosphate to cyclic pyranopterin monophosphate (cPMP). This is Probable cyclic pyranopterin monophosphate synthase from Methanococcoides burtonii (strain DSM 6242 / NBRC 107633 / OCM 468 / ACE-M).